The primary structure comprises 481 residues: Glutamyl-tRNA(Gln) amidotransferase subunit A (481 aa).

Catalysis depends on charge relay system residues Lys74 and Ser149. Ser173 (acyl-ester intermediate) is an active-site residue.

Belongs to the amidase family. GatA subfamily. In terms of assembly, heterotrimer of A, B and C subunits.

It catalyses the reaction L-glutamyl-tRNA(Gln) + L-glutamine + ATP + H2O = L-glutaminyl-tRNA(Gln) + L-glutamate + ADP + phosphate + H(+). Functionally, allows the formation of correctly charged Gln-tRNA(Gln) through the transamidation of misacylated Glu-tRNA(Gln) in organisms which lack glutaminyl-tRNA synthetase. The reaction takes place in the presence of glutamine and ATP through an activated gamma-phospho-Glu-tRNA(Gln). This is Glutamyl-tRNA(Gln) amidotransferase subunit A from Francisella philomiragia subsp. philomiragia (strain ATCC 25017 / CCUG 19701 / FSC 153 / O#319-036).